The chain runs to 183 residues: UPF0200 protein Memar_1556 (183 aa).

Position 8–15 (8–15) interacts with ATP; it reads GMPASGKG.

Belongs to the UPF0200 family.

The polypeptide is UPF0200 protein Memar_1556 (Methanoculleus marisnigri (strain ATCC 35101 / DSM 1498 / JR1)).